We begin with the raw amino-acid sequence, 381 residues long: E3 ubiquitin-protein ligase RNF13 (381 aa).

Positions Met1–Ala34 are cleaved as a signal peptide. Topologically, residues Asp35–Tyr182 are lumenal. The region spanning Leu64–Glu160 is the PA domain. Asn88 carries an N-linked (GlcNAc...) asparagine glycan. A helical transmembrane segment spans residues Tyr183 to Ile203. The Cytoplasmic portion of the chain corresponds to Thr204–Val381. The segment at Cys240 to Lys282 adopts an RING-type; atypical zinc-finger fold. The segment at Val285–Val381 is disordered. Acidic residues-rich tracts occupy residues Ser292–Val305 and Ser339–Asp353. A compositionally biased stretch (basic and acidic residues) spans Asn370–Val381.

Widely expressed (at protein level). Lowest levels in the liver, moderate levels in the heart, intestine and spleen, and high levels in skeletal muscle, kidney, proventriculus and brain. Also expressed in inner ear after noise exposure.

The protein resides in the endoplasmic reticulum membrane. It is found in the late endosome membrane. The protein localises to the lysosome membrane. Its subcellular location is the nucleus inner membrane. The catalysed reaction is S-ubiquitinyl-[E2 ubiquitin-conjugating enzyme]-L-cysteine + [acceptor protein]-L-lysine = [E2 ubiquitin-conjugating enzyme]-L-cysteine + N(6)-ubiquitinyl-[acceptor protein]-L-lysine.. Its pathway is protein modification; protein ubiquitination. E3 ubiquitin-protein ligase that regulates cell proliferation. Involved in apoptosis regulation. Mediates ER stress-induced activation of JNK signaling pathway and apoptosis by promoting ERN1 activation and splicing of XBP1 mRNA. The sequence is that of E3 ubiquitin-protein ligase RNF13 from Gallus gallus (Chicken).